The chain runs to 1203 residues: DNA-directed RNA polymerase subunit beta' (1203 aa).

Positions 60, 62, 75, and 78 each coordinate Zn(2+). 3 residues coordinate Mg(2+): aspartate 449, aspartate 451, and aspartate 453. Cysteine 818, cysteine 892, cysteine 899, and cysteine 902 together coordinate Zn(2+).

The protein belongs to the RNA polymerase beta' chain family. As to quaternary structure, the RNAP catalytic core consists of 2 alpha, 1 beta, 1 beta' and 1 omega subunit. When a sigma factor is associated with the core the holoenzyme is formed, which can initiate transcription. It depends on Mg(2+) as a cofactor. Zn(2+) serves as cofactor.

It carries out the reaction RNA(n) + a ribonucleoside 5'-triphosphate = RNA(n+1) + diphosphate. Its function is as follows. DNA-dependent RNA polymerase catalyzes the transcription of DNA into RNA using the four ribonucleoside triphosphates as substrates. The polypeptide is DNA-directed RNA polymerase subunit beta' (Bacillus cereus (strain ATCC 14579 / DSM 31 / CCUG 7414 / JCM 2152 / NBRC 15305 / NCIMB 9373 / NCTC 2599 / NRRL B-3711)).